Here is a 406-residue protein sequence, read N- to C-terminus: Probable transcription factor FPSE_09188 (406 aa).

The tract at residues 1 to 72 (MELPTYAVSQ…PKGSSSRCNG (72 aa)) is disordered. The span at 7–20 (AVSQSLLASRSVSS) shows a compositional bias: low complexity.

This sequence belongs to the bZIP family.

The protein localises to the nucleus. The two putative transcription factors FPSE_09188 and FPSE_09189 could be responsible for orchestrating expression of the W493 A and B biosynthesis cluster genes. W493 A and B consist of six amino acid residues D-allo-thr, L-Ala, D-Ala, L-Gln, D-Tyr, and L-Val/L-Ile linked to a 3-hydroxy-4-methyltetradecanoic acid polyketide chain. In Fusarium pseudograminearum (strain CS3096) (Wheat and barley crown-rot fungus), this protein is Probable transcription factor FPSE_09188.